The following is a 92-amino-acid chain: Small ribosomal subunit protein uS19 (92 aa).

The protein belongs to the universal ribosomal protein uS19 family.

Its function is as follows. Protein S19 forms a complex with S13 that binds strongly to the 16S ribosomal RNA. In Buchnera aphidicola subsp. Baizongia pistaciae (strain Bp), this protein is Small ribosomal subunit protein uS19.